Reading from the N-terminus, the 323-residue chain is Pathogenicity locus probable regulatory protein WtsA (323 aa).

The region spanning 41 to 251 (VAPLEIDLVL…ELKTAAKRFT (211 aa)) is the Sigma-54 factor interaction domain. ATP is bound by residues 52–59 (GETGTGKD) and 123–132 (EIDSMPLSLQ). A DNA-binding region (H-T-H motif) is located at residues 293-312 (IDEAAMELGMPLRTLYHRIK).

In terms of biological role, positive activator of wtsB involved in plant pathogenicity. Probably interacts with sigma-54. The chain is Pathogenicity locus probable regulatory protein WtsA (wtsA) from Pantoea stewartii subsp. stewartii (Erwinia stewartii).